The chain runs to 250 residues: Probable transcriptional regulatory protein SAV_6832 (250 aa).

The protein belongs to the TACO1 family.

It localises to the cytoplasm. The polypeptide is Probable transcriptional regulatory protein SAV_6832 (Streptomyces avermitilis (strain ATCC 31267 / DSM 46492 / JCM 5070 / NBRC 14893 / NCIMB 12804 / NRRL 8165 / MA-4680)).